The primary structure comprises 121 residues: Small ribosomal subunit protein bS6 (121 aa).

The interval 99-121 is disordered; that stretch reads PLPAPRVAPGTEAPAEPEAAAPA. Over residues 110–121 the composition is skewed to low complexity; sequence EAPAEPEAAAPA.

Belongs to the bacterial ribosomal protein bS6 family.

Functionally, binds together with bS18 to 16S ribosomal RNA. This chain is Small ribosomal subunit protein bS6, found in Synechococcus sp. (strain CC9311).